Reading from the N-terminus, the 303-residue chain is Sulfotransferase 6B1 (303 aa).

65-70 provides a ligand contact to 3'-phosphoadenylyl sulfate; it reads KCGSNW. His-118 serves as the catalytic Proton acceptor. 3'-phosphoadenylyl sulfate contacts are provided by residues Arg-140, Ser-148, Tyr-203, 237-242, and 259-261; these read STFLAM and RKG.

It belongs to the sulfotransferase 1 family. In terms of tissue distribution, expressed in brain, heart, kidney, thymus, lung, liver and testis.

It is found in the cytoplasm. The protein resides in the cytosol. It carries out the reaction thyroxine + 3'-phosphoadenylyl sulfate = thyroxine sulfate + adenosine 3',5'-bisphosphate + H(+). In terms of biological role, sulfotransferase that utilizes 3'-phospho-5'-adenylyl sulfate (PAPS) as sulfonate donor to catalyze the sulfate conjugation of thyroxine. Involved in the metabolism of thyroxine. The chain is Sulfotransferase 6B1 (Sult6b1) from Mus musculus (Mouse).